The sequence spans 358 residues: Guanidino acid hydrolase, mitochondrial (358 aa).

A mitochondrion-targeting transit peptide spans 1–36 (MLRLLRSSWARGLGSGVATWRPSAGLFRPGCPGIRQ). The disordered stretch occupies residues 31–56 (CPGIRQASGASDTPHHQSPSSESPVQ). Residues 46–56 (HQSPSSESPVQ) are compositionally biased toward low complexity. The Mn(2+) site is built by Gln-168 and His-193. Lys-199 is modified (N6-acetyllysine). Position 223 is an N6-acetyllysine; alternate (Lys-223). An N6-succinyllysine; alternate modification is found at Lys-223. Asp-284 contacts Mn(2+).

This sequence belongs to the arginase family. Agmatinase subfamily. It depends on Mn(2+) as a cofactor. In terms of tissue distribution, detected only in liver.

Its subcellular location is the mitochondrion. The enzyme catalyses 3-guanidinopropanoate + H2O = urea + beta-alanine. It catalyses the reaction 4-guanidinobutanoate + H2O = urea + 4-aminobutanoate. It carries out the reaction taurocyamine + H2O = urea + taurine. The catalysed reaction is L-arginine + H2O = urea + L-ornithine. Its pathway is nitrogen metabolism; urea cycle; L-ornithine and urea from L-arginine: step 1/1. Hydrolyzes linear guanidino acids to form urea and the corresponding amines. Displays specificity for substrates having a negatively charged head group and short chains including taurocyamine, guanidino propanoic and butanoic acids. May protect cells by detoxifying potentially harmful amounts of guanidino acids. Metabolizes L-arginine with low efficiency. This chain is Guanidino acid hydrolase, mitochondrial (Agmat), found in Mus musculus (Mouse).